Here is a 206-residue protein sequence, read N- to C-terminus: NADH-quinone oxidoreductase subunit C (206 aa).

Belongs to the complex I 30 kDa subunit family. As to quaternary structure, NDH-1 is composed of 14 different subunits. Subunits NuoB, C, D, E, F, and G constitute the peripheral sector of the complex.

It localises to the cell inner membrane. The enzyme catalyses a quinone + NADH + 5 H(+)(in) = a quinol + NAD(+) + 4 H(+)(out). In terms of biological role, NDH-1 shuttles electrons from NADH, via FMN and iron-sulfur (Fe-S) centers, to quinones in the respiratory chain. The immediate electron acceptor for the enzyme in this species is believed to be ubiquinone. Couples the redox reaction to proton translocation (for every two electrons transferred, four hydrogen ions are translocated across the cytoplasmic membrane), and thus conserves the redox energy in a proton gradient. This chain is NADH-quinone oxidoreductase subunit C, found in Nitrosomonas europaea (strain ATCC 19718 / CIP 103999 / KCTC 2705 / NBRC 14298).